The following is a 130-amino-acid chain: Small ribosomal subunit protein uS9 (130 aa).

Belongs to the universal ribosomal protein uS9 family.

The polypeptide is Small ribosomal subunit protein uS9 (Leptothrix cholodnii (strain ATCC 51168 / LMG 8142 / SP-6) (Leptothrix discophora (strain SP-6))).